The following is a 296-amino-acid chain: Polyadenylate-binding protein 2-A (296 aa).

A disordered region spans residues 1-106 (MAAVSSVASL…GELTGDQTIE (106 aa)). A compositionally biased stretch (gly residues) spans 71–82 (GRGGSGGGGAGG). Residues 84–97 (EELEDEELEEEEPG) are compositionally biased toward acidic residues. The stretch at 107–141 (DPELEAIKARVREMEEEAEKLKELQNEVEKQMNMS) forms a coiled coil. The tract at residues 146–296 (NAGPVIMSVE…ARATSWYTPY (151 aa)) is necessary for homooligomerization. The RRM domain maps to 163-240 (RSIYVGNVDY…RQIKVVPKRT (78 aa)).

In terms of assembly, monomer and homooligomer. Binds RNA as a monomer and oligomerizes when bound to poly(A). Shows dynamic spatial expression throughout development. First expressed in the animal pole region of the egg and this pattern persists through to the blastula stage. In gastrula and neurula embryos, expressed mainly in ectodermal, neural and epidermal regions. Neural tissue-specific expression pattern persists into tailbud stage when expression is localized to the brain and spinal cord. At early tadpole stage, expression becomes gradually confined to the specific vesicle regions of the developing brain. At stage 39, expressed in the telencephalon and mesencephalon regions of the brain. Also detected in the eye and olfactory pit at the tadpole stage. Expressed during gut endoderm development. At stage 35, expressed exclusively in the anterior portion of the gut endoderm, which includes the prospective liver, stomach and pancreas. As development proceeds, expression becomes restricted to the pancreas, and by stage 46/47 (the seventh day of development) expression is localized exclusively to the pancreas. Expressed in most adult tissues.

The protein resides in the nucleus. It is found in the cytoplasm. In terms of biological role, involved in the 3'-end formation of mRNA precursors (pre-mRNA) by the addition of a poly(A) tail of 200-250 nt to the upstream cleavage product. Stimulates poly(A) polymerase (PAPOLA) conferring processivity on the poly(A) tail elongation reaction and also controls the poly(A) tail length. Increases the affinity of poly(A) polymerase for RNA. Binds to poly(A) and to poly(G) with high affinity. May protect the poly(A) tail from degradation. The sequence is that of Polyadenylate-binding protein 2-A (pabpn1-a) from Xenopus laevis (African clawed frog).